The chain runs to 169 residues: Inorganic pyrophosphatase (169 aa).

At Met-1 the chain carries N-formylmethionine. Substrate is bound by residues Lys-28, Arg-42, and Tyr-54. Residues Asp-64, Asp-69, and Asp-101 each contribute to the Mg(2+) site. A substrate-binding site is contributed by Tyr-138.

The protein belongs to the PPase family. Homohexamer. Mg(2+) serves as cofactor.

Its subcellular location is the cytoplasm. It carries out the reaction diphosphate + H2O = 2 phosphate + H(+). Its activity is regulated as follows. Inhibited by ATP, but not by fructose 1,6-bisphosphate or 2-phosphoglycerate. Hydrolyzes PPi generated in anabolic reactions. Functionally, catalyzes the hydrolysis of inorganic pyrophosphate (PPi) forming two phosphate ions. This Synechocystis sp. (strain ATCC 27184 / PCC 6803 / Kazusa) protein is Inorganic pyrophosphatase.